A 187-amino-acid polypeptide reads, in one-letter code: Large ribosomal subunit protein uL22B (187 aa).

This sequence belongs to the universal ribosomal protein uL22 family. As to quaternary structure, component of the large ribosomal subunit (LSU). Mature yeast ribosomes consist of a small (40S) and a large (60S) subunit. The 40S small subunit contains 1 molecule of ribosomal RNA (18S rRNA) and at least 33 different proteins. The large 60S subunit contains 3 rRNA molecules (25S, 5.8S and 5S rRNA) and at least 46 different proteins. uL22 is associated with the polypeptide exit tunnel.

It localises to the cytoplasm. Component of the ribosome, a large ribonucleoprotein complex responsible for the synthesis of proteins in the cell. The small ribosomal subunit (SSU) binds messenger RNAs (mRNAs) and translates the encoded message by selecting cognate aminoacyl-transfer RNA (tRNA) molecules. The large subunit (LSU) contains the ribosomal catalytic site termed the peptidyl transferase center (PTC), which catalyzes the formation of peptide bonds, thereby polymerizing the amino acids delivered by tRNAs into a polypeptide chain. The nascent polypeptides leave the ribosome through a tunnel in the LSU and interact with protein factors that function in enzymatic processing, targeting, and the membrane insertion of nascent chains at the exit of the ribosomal tunnel. In Schizosaccharomyces pombe (strain 972 / ATCC 24843) (Fission yeast), this protein is Large ribosomal subunit protein uL22B (rpl1702).